Reading from the N-terminus, the 469-residue chain is Aryl-phospho-beta-D-glucosidase BglH (469 aa).

E175 acts as the Proton donor in catalysis. E368 serves as the catalytic Nucleophile.

It belongs to the glycosyl hydrolase 1 family.

The enzyme catalyses 6-phospho-beta-D-glucosyl-(1-&gt;4)-D-glucose + H2O = D-glucose 6-phosphate + D-glucose. In terms of biological role, catalyzes the hydrolysis of aryl-phospho-beta-D-glucosides such as 4-methylumbelliferyl-phospho-beta-D-glucopyranoside (MUG-P), phosphoarbutin and phosphosalicin. Plays a major role in the utilization of arbutin or salicin as the sole carbon source. BglA and BglH are the major proteins contributing to hydrolysis of MUG-P by extracts of late-exponential-phase or stationary-phase B.subtilis cells. The polypeptide is Aryl-phospho-beta-D-glucosidase BglH (bglH) (Bacillus subtilis (strain 168)).